Here is a 297-residue protein sequence, read N- to C-terminus: Transmembrane protein 178A (297 aa).

The signal sequence occupies residues 1-25 (MEPRALVTALSLGLSLCSLGLLVTA). Over 26–179 (IFTDHWYETD…LLHLRRITAG (154 aa)) the chain is Extracellular. Over residues 41–57 (ESCERSRAGADPPDQKN) the composition is skewed to basic and acidic residues. A disordered region spans residues 41 to 86 (ESCERSRAGADPPDQKNRLMPLSHLPLRDSPPLGRRLLPGGPGRSD). Residues 68–79 (RDSPPLGRRLLP) show a composition bias toward low complexity. N-linked (GlcNAc...) asparagine glycosylation is present at N158. A helical membrane pass occupies residues 180–200 (FLGMAVAVLLCGCIVATVSFF). Residues 201 to 208 (WEESLTQH) are Cytoplasmic-facing. A helical membrane pass occupies residues 209-229 (VAGLLFLMTGIFCTISLCTYA). Over 230 to 257 (ASVSYDLNRVPKLIYSLPHDVEHGYSWS) the chain is Extracellular. A helical membrane pass occupies residues 258 to 278 (IFCAWCSLGFIVAAGGLCIAY). The Cytoplasmic segment spans residues 279–297 (PFISRTKIAHLKSGRDSTV).

The protein belongs to the TMEM178 family. As to quaternary structure, interacts with STIM1.

The protein localises to the endoplasmic reticulum membrane. Its function is as follows. Acts as a negative regulator of osteoclast differentiation in basal and inflammatory conditions by regulating TNFSF11-induced Ca (2+) fluxes, thereby controlling the induction of NFATC1. The chain is Transmembrane protein 178A (Tmem178a) from Rattus norvegicus (Rat).